Consider the following 306-residue polypeptide: Acetyl-coenzyme A carboxylase carboxyl transferase subunit beta (306 aa).

Residues Leu25–Thr294 form the CoA carboxyltransferase N-terminal domain. Residues Ala284–Ala306 are disordered.

This sequence belongs to the AccD/PCCB family. Acetyl-CoA carboxylase is a heterohexamer composed of biotin carboxyl carrier protein (AccB), biotin carboxylase (AccC) and two subunits each of ACCase subunit alpha (AccA) and ACCase subunit beta (AccD).

The protein resides in the cytoplasm. The enzyme catalyses N(6)-carboxybiotinyl-L-lysyl-[protein] + acetyl-CoA = N(6)-biotinyl-L-lysyl-[protein] + malonyl-CoA. The protein operates within lipid metabolism; malonyl-CoA biosynthesis; malonyl-CoA from acetyl-CoA: step 1/1. Its function is as follows. Component of the acetyl coenzyme A carboxylase (ACC) complex. Biotin carboxylase (BC) catalyzes the carboxylation of biotin on its carrier protein (BCCP) and then the CO(2) group is transferred by the transcarboxylase to acetyl-CoA to form malonyl-CoA. The chain is Acetyl-coenzyme A carboxylase carboxyl transferase subunit beta from Bartonella tribocorum (strain CIP 105476 / IBS 506).